Reading from the N-terminus, the 175-residue chain is Alpha-crystallin B chain (175 aa).

M1 carries the N-acetylmethionine modification. The residue at position 19 (S19) is a Phosphoserine. S41 carries an O-linked (GlcNAc) serine glycan. 2 positions are modified to phosphoserine: S45 and S59. The sHSP domain occupies 56–164; sequence RAPSWFDTGL…PERTIPITRE (109 aa). H83 contributes to the Zn(2+) binding site. The residue at position 92 (K92) is an N6-acetyllysine. The Zn(2+) site is built by H104, E106, H111, and H119. The disordered stretch occupies residues 142 to 175; that stretch reads VLTVNGPRKQVSGPERTIPITREEKPAVTAAPKK. K166 is modified (N6-acetyllysine). T170 carries an O-linked (GlcNAc) threonine glycan.

This sequence belongs to the small heat shock protein (HSP20) family. In terms of assembly, heteromer composed of three CRYAA and one CRYAB subunits. Aggregates with homologous proteins, including the small heat shock protein HSPB1, to form large heteromeric complexes. Inter-subunit bridging via zinc ions enhances stability, which is crucial as there is no protein turn over in the lens. Interacts with HSPBAP1 and TTN/titin. Interacts with TMEM109; in the cellular response to DNA damage. Interacts with DES; binds rapidly during early stages of DES filament assembly and a reduced binding seen in the later stages. Interacts with TMED10; the interaction mediates the translocation from the cytoplasm into the ERGIC (endoplasmic reticulum-Golgi intermediate compartment) and thereby secretion. Interacts with ATP6V1A and with MTOR, forming a ternary complex.

The protein resides in the cytoplasm. It is found in the nucleus. Its subcellular location is the secreted. The protein localises to the lysosome. May contribute to the transparency and refractive index of the lens. Has chaperone-like activity, preventing aggregation of various proteins under a wide range of stress conditions. In lens epithelial cells, stabilizes the ATP6V1A protein, preventing its degradation by the proteasome. This is Alpha-crystallin B chain (CRYAB) from Macaca fascicularis (Crab-eating macaque).